Consider the following 1531-residue polypeptide: Probable outer membrane protein PmpD (1531 aa).

The signal sequence occupies residues 1-20; that stretch reads MSSEKDIKSTCSKFSLSVVA. An Autotransporter domain is found at 1244 to 1531; that stretch reads EFDYSTNVWG…EANTGLRLIF (288 aa).

It belongs to the PMP outer membrane protein family.

It is found in the secreted. The protein localises to the cell wall. It localises to the cell outer membrane. This is Probable outer membrane protein PmpD (pmpD) from Chlamydia trachomatis serovar D (strain ATCC VR-885 / DSM 19411 / UW-3/Cx).